The sequence spans 69 residues: Ribosome modulation factor (69 aa).

It belongs to the ribosome modulation factor family.

The protein resides in the cytoplasm. In terms of biological role, during stationary phase, converts 70S ribosomes to an inactive dimeric form (100S ribosomes). This is Ribosome modulation factor from Chromohalobacter salexigens (strain ATCC BAA-138 / DSM 3043 / CIP 106854 / NCIMB 13768 / 1H11).